Here is a 707-residue protein sequence, read N- to C-terminus: Polyribonucleotide nucleotidyltransferase (707 aa).

Asp486 and Asp492 together coordinate Mg(2+). The KH domain occupies 553 to 612; the sequence is PTVTTLRVLPDKIPIIIGPAGKNIKKIIEETKVKIDLDPEGLVKIYATSKEAAEKAVSMI. The S1 motif domain maps to 622–690; that stretch reads GEVYMGKVTR…DQGRIKVSLK (69 aa).

It belongs to the polyribonucleotide nucleotidyltransferase family. The cofactor is Mg(2+).

Its subcellular location is the cytoplasm. The enzyme catalyses RNA(n+1) + phosphate = RNA(n) + a ribonucleoside 5'-diphosphate. In terms of biological role, involved in mRNA degradation. Catalyzes the phosphorolysis of single-stranded polyribonucleotides processively in the 3'- to 5'-direction. The protein is Polyribonucleotide nucleotidyltransferase of Sulfurihydrogenibium azorense (strain DSM 15241 / OCM 825 / Az-Fu1).